The primary structure comprises 254 residues: MAFLIHSPLEQFEVTSLISLNLPVLGYINLSLTNLGLYTILTVYLVLALHIMGSNNKQLIPSRWSIALESSFASVHGLVKSQIGAANEMYLPFIYSLFFFILIANLSGNVPYGFTVATSIMVSIGLSMTIFIGVTILGLRLHKVHFFSFFVPSGTPLGLVPLLVPIELISYLARAFSLGVRLFANVTAGHVLMKILAGFLAPLFTSTFIISVLTVLPFIIFTGIIGLEIAVSFIQAYVFCVLTCSYLKDAIDLH.

Positions 1–6 (MAFLIH) are cleaved as a propeptide — removed in mature form. 7 helical membrane passes run 32 to 52 (LTNLGLYTILTVYLVLALHIM), 83 to 103 (IGAANEMYLPFIYSLFFFILI), 119 to 139 (SIMVSIGLSMTIFIGVTILGL), 146 to 166 (FFSFFVPSGTPLGLVPLLVPI), 182 to 202 (LFANVTAGHVLMKILAGFLAP), 207 to 227 (TFIISVLTVLPFIIFTGIIGL), and 228 to 248 (EIAVSFIQAYVFCVLTCSYLK).

It belongs to the ATPase A chain family. In terms of assembly, F-type ATPases have 2 components, CF(1) - the catalytic core - and CF(0) - the membrane proton channel. CF(1) has five subunits: alpha(3), beta(3), gamma(1), delta(1), epsilon(1). CF(0) has three main subunits: a, b and c.

It localises to the mitochondrion inner membrane. Functionally, mitochondrial membrane ATP synthase (F(1)F(0) ATP synthase or Complex V) produces ATP from ADP in the presence of a proton gradient across the membrane which is generated by electron transport complexes of the respiratory chain. F-type ATPases consist of two structural domains, F(1) - containing the extramembraneous catalytic core and F(0) - containing the membrane proton channel, linked together by a central stalk and a peripheral stalk. During catalysis, ATP synthesis in the catalytic domain of F(1) is coupled via a rotary mechanism of the central stalk subunits to proton translocation. Key component of the proton channel; it may play a direct role in the translocation of protons across the membrane. The sequence is that of ATP synthase subunit a (ATP6) from Mycosarcoma maydis (Corn smut fungus).